A 359-amino-acid polypeptide reads, in one-letter code: DNA polymerase IV (359 aa).

The UmuC domain maps to 6 to 186 (IIHVDMDAFY…LPIEAFWGVG (181 aa)). The Mg(2+) site is built by aspartate 10 and aspartate 104. Residue glutamate 105 is part of the active site.

It belongs to the DNA polymerase type-Y family. As to quaternary structure, monomer. Mg(2+) is required as a cofactor.

It localises to the cytoplasm. It catalyses the reaction DNA(n) + a 2'-deoxyribonucleoside 5'-triphosphate = DNA(n+1) + diphosphate. Functionally, poorly processive, error-prone DNA polymerase involved in untargeted mutagenesis. Copies undamaged DNA at stalled replication forks, which arise in vivo from mismatched or misaligned primer ends. These misaligned primers can be extended by PolIV. Exhibits no 3'-5' exonuclease (proofreading) activity. May be involved in translesional synthesis, in conjunction with the beta clamp from PolIII. The chain is DNA polymerase IV from Akkermansia muciniphila (strain ATCC BAA-835 / DSM 22959 / JCM 33894 / BCRC 81048 / CCUG 64013 / CIP 107961 / Muc).